A 392-amino-acid polypeptide reads, in one-letter code: Phospho-N-acetylmuramoyl-pentapeptide-transferase (392 aa).

Helical transmembrane passes span 28 to 48 (RALM…PFVI), 76 to 96 (TMGG…WFDL), 100 to 120 (FVWI…VDDW), 137 to 157 (YLWQ…SISE), 193 to 213 (ISYP…IVGS), 225 to 245 (GLAI…AYVT), 262 to 282 (SGEL…FLWF), 289 to 309 (VFMG…IAVI), 314 to 334 (IVLA…MLQV), and 369 to 389 (QVVV…LSTL).

The protein belongs to the glycosyltransferase 4 family. MraY subfamily. Mg(2+) serves as cofactor.

The protein localises to the cell inner membrane. The catalysed reaction is UDP-N-acetyl-alpha-D-muramoyl-L-alanyl-gamma-D-glutamyl-meso-2,6-diaminopimeloyl-D-alanyl-D-alanine + di-trans,octa-cis-undecaprenyl phosphate = di-trans,octa-cis-undecaprenyl diphospho-N-acetyl-alpha-D-muramoyl-L-alanyl-D-glutamyl-meso-2,6-diaminopimeloyl-D-alanyl-D-alanine + UMP. It functions in the pathway cell wall biogenesis; peptidoglycan biosynthesis. Functionally, catalyzes the initial step of the lipid cycle reactions in the biosynthesis of the cell wall peptidoglycan: transfers peptidoglycan precursor phospho-MurNAc-pentapeptide from UDP-MurNAc-pentapeptide onto the lipid carrier undecaprenyl phosphate, yielding undecaprenyl-pyrophosphoryl-MurNAc-pentapeptide, known as lipid I. In Polaromonas naphthalenivorans (strain CJ2), this protein is Phospho-N-acetylmuramoyl-pentapeptide-transferase.